Reading from the N-terminus, the 245-residue chain is 1-(5-phosphoribosyl)-5-[(5-phosphoribosylamino)methylideneamino] imidazole-4-carboxamide isomerase (245 aa).

Catalysis depends on Asp-8, which acts as the Proton acceptor. Asp-130 serves as the catalytic Proton donor.

It belongs to the HisA/HisF family.

Its subcellular location is the cytoplasm. It catalyses the reaction 1-(5-phospho-beta-D-ribosyl)-5-[(5-phospho-beta-D-ribosylamino)methylideneamino]imidazole-4-carboxamide = 5-[(5-phospho-1-deoxy-D-ribulos-1-ylimino)methylamino]-1-(5-phospho-beta-D-ribosyl)imidazole-4-carboxamide. The protein operates within amino-acid biosynthesis; L-histidine biosynthesis; L-histidine from 5-phospho-alpha-D-ribose 1-diphosphate: step 4/9. The chain is 1-(5-phosphoribosyl)-5-[(5-phosphoribosylamino)methylideneamino] imidazole-4-carboxamide isomerase from Marinobacter nauticus (strain ATCC 700491 / DSM 11845 / VT8) (Marinobacter aquaeolei).